We begin with the raw amino-acid sequence, 122 residues long: ATP synthase epsilon chain (122 aa).

This sequence belongs to the ATPase epsilon chain family. In terms of assembly, F-type ATPases have 2 components, CF(1) - the catalytic core - and CF(0) - the membrane proton channel. CF(1) has five subunits: alpha(3), beta(3), gamma(1), delta(1), epsilon(1). CF(0) has three main subunits: a, b and c.

It localises to the cell membrane. Functionally, produces ATP from ADP in the presence of a proton gradient across the membrane. This chain is ATP synthase epsilon chain, found in Rhodococcus opacus (strain B4).